Consider the following 145-residue polypeptide: Large ribosomal subunit protein uL11 (145 aa).

This sequence belongs to the universal ribosomal protein uL11 family. In terms of assembly, part of the ribosomal stalk of the 50S ribosomal subunit. Interacts with L10 and the large rRNA to form the base of the stalk. L10 forms an elongated spine to which L12 dimers bind in a sequential fashion forming a multimeric L10(L12)X complex. In terms of processing, one or more lysine residues are methylated.

Its function is as follows. Forms part of the ribosomal stalk which helps the ribosome interact with GTP-bound translation factors. The sequence is that of Large ribosomal subunit protein uL11 from Flavobacterium johnsoniae (strain ATCC 17061 / DSM 2064 / JCM 8514 / BCRC 14874 / CCUG 350202 / NBRC 14942 / NCIMB 11054 / UW101) (Cytophaga johnsonae).